The chain runs to 245 residues: UPF0280 protein UNCMA_16740 (245 aa).

It belongs to the UPF0280 family.

The chain is UPF0280 protein UNCMA_16740 from Methanocella arvoryzae (strain DSM 22066 / NBRC 105507 / MRE50).